The sequence spans 232 residues: 7-cyano-7-deazaguanine synthase (232 aa).

7–17 (CSGGLDSVSLA) is an ATP binding site. Zn(2+) is bound by residues Cys-185, Cys-193, Cys-196, and Cys-199.

The protein belongs to the QueC family. Zn(2+) serves as cofactor.

It carries out the reaction 7-carboxy-7-deazaguanine + NH4(+) + ATP = 7-cyano-7-deazaguanine + ADP + phosphate + H2O + H(+). Its pathway is purine metabolism; 7-cyano-7-deazaguanine biosynthesis. In terms of biological role, catalyzes the ATP-dependent conversion of 7-carboxy-7-deazaguanine (CDG) to 7-cyano-7-deazaguanine (preQ(0)). The polypeptide is 7-cyano-7-deazaguanine synthase (Brucella canis (strain ATCC 23365 / NCTC 10854 / RM-666)).